Here is a 310-residue protein sequence, read N- to C-terminus: Cytosolic Fe-S cluster assembly factor Nubp1 homolog (310 aa).

[4Fe-4S] cluster-binding residues include C8, C22, C25, and C31. ATP is bound at residue 62–69 (GKGGVGKS). Residues C239 and C242 each coordinate [4Fe-4S] cluster.

Belongs to the Mrp/NBP35 ATP-binding proteins family. NUBP1/NBP35 subfamily. Heterotetramer of 2 Nubp1 and 2 Nubp2 chains. [4Fe-4S] cluster is required as a cofactor.

It localises to the cytoplasm. Functionally, component of the cytosolic iron-sulfur (Fe/S) protein assembly (CIA) machinery. Required for maturation of extramitochondrial Fe-S proteins. The Nubp1-Nubp2 heterotetramer forms a Fe-S scaffold complex, mediating the de novo assembly of an Fe-S cluster and its transfer to target apoproteins. This is Cytosolic Fe-S cluster assembly factor Nubp1 homolog from Drosophila ananassae (Fruit fly).